We begin with the raw amino-acid sequence, 296 residues long: Syntenin-2 (296 aa).

PDZ domains follow at residues 112 to 191 and 196 to 271; these read EIHL…VRDR and TVTM…IPTV.

In terms of assembly, monomer and homodimer. Interacts with SDCBP. Interacts with TM4SF1.

It localises to the cytoplasm. It is found in the nucleus. Its subcellular location is the nucleolus. The protein resides in the nucleoplasm. The protein localises to the cell membrane. It localises to the nucleus speckle. Its function is as follows. Binds phosphatidylinositol 4,5-bisphosphate (PIP2). May play a role in the organization of nuclear PIP2, cell division and cell survival. In Rattus norvegicus (Rat), this protein is Syntenin-2 (Sdcbp2).